Consider the following 1025-residue polypeptide: Interferon-induced helicase C domain-containing protein 1 (1025 aa).

CARD domains lie at 7-97 and 110-190; these read AEDS…YVKP and AHDE…QTGN. Glycyl lysine isopeptide (Lys-Gly) (interchain with G-Cter in ISG15) cross-links involve residues lysine 23 and lysine 43. Residues 273 to 297 form a disordered region; sequence SLGHNSNMGRDSGTMGSDSDESVIQ. The segment covering 275–297 has biased composition (polar residues); the sequence is GHNSNMGRDSGTMGSDSDESVIQ. Phosphoserine occurs at positions 289, 291, and 302. Residues 317–510 form the Helicase ATP-binding domain; it reads AQPALDGKNI…SEAEKHILNI (194 aa). Residues serine 645 and serine 648 each carry the phosphoserine modification. In terms of domain architecture, Helicase C-terminal spans 700–872; that stretch reads KLIKLRNTIL…NMKPEEYAHK (173 aa). Serine 828 bears the Phosphoserine; by RIOK3 mark. In terms of domain architecture, RLR CTR spans 893–1020; that stretch reads AKQYNDNPSL…PDLDYSEYCL (128 aa). Zn(2+) contacts are provided by cysteine 907, cysteine 910, cysteine 962, and cysteine 964.

Belongs to the helicase family. RLR subfamily. As to quaternary structure, monomer in the absence of ligands and homodimerizes in the presence of dsRNA ligands. Can assemble into helical or linear polymeric filaments on long dsRNA. Interacts with MAVS/IPS1. Interacts (via the CARD domains) with TKFC, the interaction is inhibited by viral infection. Interacts with PCBP2. Interacts with NLRC5. Interacts with PIAS2-beta. Interacts with DDX60. Interacts with ANKRD17. Interacts with IKBKE. Interacts with ATG5 and ATG12, either as ATG5 and ATG12 monomers or as ATG12-ATG5 conjugates. Interacts with ZCCHC3; leading to activate IFIH1/MDA5. Interacts with RNF123. Interacts with DDX3X. Interacts with NOD1; this interaction promotes transcription of antiviral genes and inhibition of viral replication. Interacts with ECSIT; this interaction bridges IFIH1 to the MAVS complex at the mitochondrion. In terms of processing, during apoptosis, processed into 3 cleavage products. The helicase-containing fragment, once liberated from the CARD domains, translocate from the cytoplasm to the nucleus. The processed protein significantly sensitizes cells to DNA degradation. Sumoylated. Sumoylation positively regulates its role in type I interferon induction and is enhanced by PIAS2-beta. Post-translationally, ubiquitinated by RNF125, leading to its degradation by the proteasome. USP17/UPS17L2-dependent deubiquitination positively regulates the receptor. Ubiquitinated by TRIM25 via 'Lys-63'-linked ubiquitination, promoting activation of IFIH1/MDA5. Ubiquitinated by TRIM40 via 'Lys-48'-linked ubiquitination; leading to proteasomal degradation. Ubiquitinated by TRIM65 via 'Lys-63'-linked ubiquitination, promoting activation of IFIH1/MDA5. In terms of processing, ISGylated by ISG15. ISGylation increases upon infection with viruses. ISGylation at Lys-23 and Lys-43 is dependent of dephosphorylation, regulates mitochondrial translocation and oligomerization. Essential for IFIH1/MDA5-mediated cytokine responses and restriction of virus replication. Phosphorylated. Dephosphorylated by phsophatases PP1; dephosphorylation precedes and is required for ISGylation. In terms of tissue distribution, expression is prominent in lung, liver, kidney, heart and spleen (at protein level). Widely expressed at low level.

It localises to the cytoplasm. It is found in the nucleus. The protein localises to the mitochondrion. It carries out the reaction ATP + H2O = ADP + phosphate + H(+). Innate immune receptor which acts as a cytoplasmic sensor of viral nucleic acids and plays a major role in sensing viral infection and in the activation of a cascade of antiviral responses including the induction of type I interferons and pro-inflammatory cytokines. Its ligands include mRNA lacking 2'-O-methylation at their 5' cap and long-dsRNA (&gt;1 kb in length). Upon ligand binding it associates with mitochondria antiviral signaling protein (MAVS/IPS1) which activates the IKK-related kinases: TBK1 and IKBKE which phosphorylate interferon regulatory factors: IRF3 and IRF7 which in turn activate transcription of antiviral immunological genes, including interferons (IFNs); IFN-alpha and IFN-beta. Responsible for detecting the Picornaviridae family members such as encephalomyocarditis virus (EMCV), mengo encephalomyocarditis virus (ENMG), and theiler's murine encephalomyelitis virus (TMEV). Can also detect other viruses such as dengue virus (DENV), west Nile virus (WNV), and reovirus. Also involved in antiviral signaling in response to viruses containing a dsDNA genome, such as vaccinia virus. Plays an important role in amplifying innate immune signaling through recognition of RNA metabolites that are produced during virus infection by ribonuclease L (RNase L). May play an important role in enhancing natural killer cell function and may be involved in growth inhibition and apoptosis in several tumor cell lines. The polypeptide is Interferon-induced helicase C domain-containing protein 1 (Mus musculus (Mouse)).